The chain runs to 131 residues: Small ribosomal subunit protein uS8 (131 aa).

This sequence belongs to the universal ribosomal protein uS8 family. In terms of assembly, part of the 30S ribosomal subunit. Contacts proteins S5 and S12.

Its function is as follows. One of the primary rRNA binding proteins, it binds directly to 16S rRNA central domain where it helps coordinate assembly of the platform of the 30S subunit. The chain is Small ribosomal subunit protein uS8 from Wolbachia pipientis subsp. Culex pipiens (strain wPip).